Reading from the N-terminus, the 443-residue chain is Histidinol dehydrogenase (443 aa).

NAD(+)-binding residues include Y141, Q203, and N226. Substrate-binding residues include S249, Q271, and H274. Residues Q271 and H274 each contribute to the Zn(2+) site. Active-site proton acceptor residues include E339 and H340. Substrate is bound by residues H340, D373, E427, and H432. D373 provides a ligand contact to Zn(2+). H432 provides a ligand contact to Zn(2+).

It belongs to the histidinol dehydrogenase family. The cofactor is Zn(2+).

It carries out the reaction L-histidinol + 2 NAD(+) + H2O = L-histidine + 2 NADH + 3 H(+). It functions in the pathway amino-acid biosynthesis; L-histidine biosynthesis; L-histidine from 5-phospho-alpha-D-ribose 1-diphosphate: step 9/9. Its function is as follows. Catalyzes the sequential NAD-dependent oxidations of L-histidinol to L-histidinaldehyde and then to L-histidine. The protein is Histidinol dehydrogenase of Chlorobium luteolum (strain DSM 273 / BCRC 81028 / 2530) (Pelodictyon luteolum).